The primary structure comprises 132 residues: uncharacterized protein (132 aa).

A run of 3 helical transmembrane segments spans residues 28–48 (LLRLISLCIPIIRPFSFLIYP), 59–79 (ILPSILPIIPFAISSSLLFSY), and 106–126 (LLVASFVYLPYRSPLPVVIEI).

It is found in the membrane. This is an uncharacterized protein from Schizosaccharomyces pombe (strain 972 / ATCC 24843) (Fission yeast).